Reading from the N-terminus, the 89-residue chain is Acyl carrier protein MbtL (89 aa).

The Carrier domain occupies N8–P83. O-(pantetheine 4'-phosphoryl)serine is present on S43.

Post-translationally, 4'-phosphopantetheine is transferred from CoA to a specific serine of apo-ACP, leading to the activated holo-ACP form.

Its subcellular location is the cytoplasm. Its pathway is siderophore biosynthesis; mycobactin biosynthesis. In terms of biological role, acyl carrier protein involved in the formation of acyl-S-ACP intermediates within the mycobactin biosynthesis process. The chain is Acyl carrier protein MbtL (mbtL) from Mycolicibacterium paratuberculosis (strain ATCC BAA-968 / K-10) (Mycobacterium paratuberculosis).